The primary structure comprises 219 residues: MTAHDRGFDGVERRGLMFVLSSPSGAGKTTLSRLLIERVEGLSLSVSATTRPMRPGEVDGRDYAFVDEKTFAAMVERNDLLEWAHVFDNHYGTPRAPVDAALSSGRDVLFDIDWQGTQQLREKARDDVVSVFILPPSAADLERRLHTRAQDSDDVIRERMARAAHEVSHWAEYDYIVINRDIDEAFAEVQSILKAERLKRERRTGLTAFVRELQRQLET.

In terms of domain architecture, Guanylate kinase-like spans 15–194; it reads GLMFVLSSPS…AFAEVQSILK (180 aa). Residue 22 to 29 coordinates ATP; it reads SPSGAGKT.

It belongs to the guanylate kinase family.

The protein localises to the cytoplasm. The enzyme catalyses GMP + ATP = GDP + ADP. Functionally, essential for recycling GMP and indirectly, cGMP. The polypeptide is Guanylate kinase (Nitrobacter winogradskyi (strain ATCC 25391 / DSM 10237 / CIP 104748 / NCIMB 11846 / Nb-255)).